The sequence spans 581 residues: Adenine deaminase (581 aa).

This sequence belongs to the metallo-dependent hydrolases superfamily. Adenine deaminase family. Mn(2+) serves as cofactor.

The enzyme catalyses adenine + H2O + H(+) = hypoxanthine + NH4(+). In Brucella suis biovar 1 (strain 1330), this protein is Adenine deaminase.